We begin with the raw amino-acid sequence, 35 residues long: Apolipophorin-3 (35 aa).

Equilibrium between a soluble monomer and a bound lipoprotein form. Apolipophorin-3 associates with lipophorin during lipid loading until each particle contains 9 or 14 molecules of apolipophorin-3. As to expression, hemolymph.

It is found in the secreted. Its function is as follows. Assists in the loading of diacylglycerol, generated from triacylglycerol stores in the fat body through the action of adipokinetic hormone, into lipophorin, the hemolymph lipoprotein. It increases the lipid carrying capacity of lipophorin by covering the expanding hydrophobic surface resulting from diacylglycerol uptake. It thus plays a critical role in the transport of lipids during flight in several species of insects. Has hemagglutinating activity towards rabbit erythrocytes. The chain is Apolipophorin-3 from Heliothis virescens (Tobacco budworm moth).